The sequence spans 185 residues: Protein OPG161 (185 aa).

At 1–33 (MMTPENDEEQTSVFSATVYGDKIQGKNKRKRVI) the chain is on the intravirion side. A helical membrane pass occupies residues 34–56 (GLCIRISMVISLLSMITMSAFLI). The Virion surface portion of the chain corresponds to 57 to 185 (VRLNQCMSAN…RKYFCVKTMN (129 aa)). Residues 98–185 (ESCNGLYYQG…RKYFCVKTMN (88 aa)) form a C-type lectin-like domain region. 2 N-linked (GlcNAc...) asparagine; by host glycosylation sites follow: Asn-125 and Asn-135.

This sequence belongs to the orthopoxvirus OPG161 family. Homodimer, disulfide-linked. Interacts with protein OPG190. Interacts (via C-terminus) with protein OPG164. Interacts with OPG162.

The protein localises to the virion membrane. It is found in the host membrane. Functionally, forms a complex with OPG162 and OPG190 to coordinate the incorporation of OPG164 into wrapped enveloped virion (EV) membranes and, subsequently, the production of actin tails. Therefore plays an essential role in efficient cell-to-cell spread of viral particles. The chain is Protein OPG161 (OPG161) from Homo sapiens (Human).